The sequence spans 115 residues: Large ribosomal subunit protein bL19 (115 aa).

Belongs to the bacterial ribosomal protein bL19 family.

In terms of biological role, this protein is located at the 30S-50S ribosomal subunit interface and may play a role in the structure and function of the aminoacyl-tRNA binding site. This is Large ribosomal subunit protein bL19 from Nitratidesulfovibrio vulgaris (strain ATCC 29579 / DSM 644 / CCUG 34227 / NCIMB 8303 / VKM B-1760 / Hildenborough) (Desulfovibrio vulgaris).